The chain runs to 208 residues: Large ribosomal subunit protein uL4 (208 aa).

The tract at residues 50–83 (VKTRAEVSGGGRKPWKQKGTGRARQGSIRAPQWK) is disordered.

The protein belongs to the universal ribosomal protein uL4 family. Part of the 50S ribosomal subunit.

Functionally, one of the primary rRNA binding proteins, this protein initially binds near the 5'-end of the 23S rRNA. It is important during the early stages of 50S assembly. It makes multiple contacts with different domains of the 23S rRNA in the assembled 50S subunit and ribosome. In terms of biological role, forms part of the polypeptide exit tunnel. This is Large ribosomal subunit protein uL4 from Mycoplasma mycoides subsp. mycoides SC (strain CCUG 32753 / NCTC 10114 / PG1).